A 103-amino-acid chain; its full sequence is Toluene-4-monooxygenase system, effector component (103 aa).

The protein belongs to the TmoD/XamoD family. The alkene monooxygenase multicomponent enzyme system is composed of an electron transfer component and a monooxygenase component interacting with the effector protein TmoD. The electron transfer component is composed of a ferredoxin reductase (TmoF) and a ferredoxin (TmoC), and the monooxygenase component is formed by a heterohexamer (dimer of heterotrimers) of two alpha subunits (TmoA), two beta subunits (TmoE) and two gamma subunits (TmoB).

It functions in the pathway xenobiotic degradation; toluene degradation. Effector component of the toluene-4-monooxygenase multicomponent enzyme system which catalyzes the O2- and NADH-dependent hydroxylation of toluene to form p-cresol. Required for optimal efficiency and specificity of the holoenzyme. The sequence is that of Toluene-4-monooxygenase system, effector component from Ectopseudomonas mendocina (Pseudomonas mendocina).